A 1426-amino-acid chain; its full sequence is A disintegrin and metalloproteinase with thrombospondin motifs 13 (1426 aa).

An N-terminal signal peptide occupies residues 1-33 (MSQLCLWLTCQPCYAVSVRGILTGAIFILGCWG). Positions 34–76 (LSDFQKSLLQDLEPKDVSSYFGHHAAPFTGHPPSHLQRLRRRR) are excised as a propeptide. One can recognise a Peptidase M12B domain in the interval 74–291 (RRRTLEDILH…GQMHCFQDPP (218 aa)). Glu85 contacts Ca(2+). N-linked (GlcNAc...) asparagine glycosylation is found at Asn144 and Asn148. 3 disulfides stabilise this stretch: Cys157–Cys210, Cys204–Cys286, and Cys246–Cys270. Ca(2+)-binding residues include Asp175, Asp184, Glu186, Asp189, and Glu214. His226 lines the Zn(2+) pocket. Residue Glu227 is part of the active site. Zn(2+) contacts are provided by His230 and His236. The Ca(2+) site is built by Thr281 and Asp289. A Disintegrin domain is found at 295–388 (SGLTRHQLMA…LAELAPVAAV (94 aa)). 11 disulfide bridges follow: Cys316/Cys342, Cys327/Cys352, Cys337/Cys371, Cys365/Cys376, Cys401/Cys438, Cys405/Cys443, Cys416/Cys428, Cys488/Cys527, Cys513/Cys532, Cys537/Cys553, and Cys550/Cys560. The TSP type-1 1 domain occupies 389–444 (HGHWSSWGPHSPCSRSCGGGVITRRRWCNNPRPAFGGRACVGEDLQAKMCNTQACE). The tract at residues 445-561 (KTQLEFMSEQ…VCGGDNSTCS (117 aa)) is cysteine-rich. A Cell attachment site motif is present at residues 503–505 (RGD). The spacer stretch occupies residues 556-685 (DNSTCSSRNG…PDITFSYFQL (130 aa)). Asn557, Asn564, Asn584, and Asn619 each carry an N-linked (GlcNAc...) asparagine glycan. TSP type-1 domains are found at residues 687-746 (QQAA…VSAP), 747-810 (CSPY…QPCP), 808-871 (PCPT…SLCS), 904-957 (WTPL…RARP), 958-1019 (CPAR…EPCP), 1020-1078 (ARWK…IADC), and 1079-1137 (AFRW…GPCA). O-linked (Fuc...) serine glycans are attached at residues Ser703 and Ser762. Asn834 is a glycosylation site (N-linked (GlcNAc...) asparagine). Ser914 is a glycosylation site (O-linked (Fuc...) serine). Thr973 is a glycosylation site (O-linked (Fuc...) threonine). A glycan (O-linked (Fuc...) serine) is linked at Ser1033. Residue Asn1057 is glycosylated (N-linked (GlcNAc...) asparagine). Residue Ser1093 is glycosylated (O-linked (Fuc...) serine). CUB domains follow at residues 1195-1302 (ACGR…FYKE) and 1293-1426 (QPAP…LALS).

Requires Zn(2+) as cofactor. Ca(2+) serves as cofactor. In terms of processing, the precursor is processed by a furin endopeptidase which cleaves off the pro-domain. Post-translationally, O-glycosylated. O-fucosylated by POFUT2 on a serine or a threonine residue found within the consensus sequence C1-X(2)-(S/T)-C2-G of the TSP type-1 repeat domains where C1 and C2 are the first and second cysteine residue of the repeat, respectively. Fucosylated repeats can then be further glycosylated by the addition of a beta-1,3-glucose residue by the glucosyltransferase, B3GALTL. Fucosylation mediates the efficient secretion of ADAMTS13. May also be C-glycosylated on tryptophan residues within the consensus sequence W-X-X-W of the TPRs, and also N-glycosylated. These other glycosylations can also facilitate secretion. As to expression, plasma. Expression is consistently high in liver, medium in lung and spleen, low in skeletal muscle and undetectable in heart, brain, kidney and testis.

The protein resides in the secreted. It carries out the reaction The enzyme cleaves the von Willebrand factor at bond 842-Tyr-|-Met-843 within the A2 domain.. With respect to regulation, zinc and calcium ions cooperatively modulate enzyme activity. The cleavage of the pro-domain is not required for protease activity. Dependence on calcium for proteolytic activity is mediated by the high affinity site. Functionally, cleaves the vWF multimers in plasma into smaller forms thereby controlling vWF-mediated platelet thrombus formation. The chain is A disintegrin and metalloproteinase with thrombospondin motifs 13 (Adamts13) from Mus musculus (Mouse).